The primary structure comprises 764 residues: 5-methyltetrahydropteroyltriglutamate--homocysteine methyltransferase (764 aa).

5-methyltetrahydropteroyltri-L-glutamate-binding positions include 16–19 (RELK) and K121. Residues 440-442 (IGS) and E493 contribute to the L-homocysteine site. Residues 440–442 (IGS) and E493 each bind L-methionine. 5-methyltetrahydropteroyltri-L-glutamate is bound by residues 524–525 (RC) and W570. Residue D608 coordinates L-homocysteine. D608 is a binding site for L-methionine. Residue E614 coordinates 5-methyltetrahydropteroyltri-L-glutamate. H650, C652, and E674 together coordinate Zn(2+). H703 (proton donor) is an active-site residue. C735 is a Zn(2+) binding site.

The protein belongs to the vitamin-B12 independent methionine synthase family. The cofactor is Zn(2+).

The enzyme catalyses 5-methyltetrahydropteroyltri-L-glutamate + L-homocysteine = tetrahydropteroyltri-L-glutamate + L-methionine. The protein operates within amino-acid biosynthesis; L-methionine biosynthesis via de novo pathway; L-methionine from L-homocysteine (MetE route): step 1/1. In terms of biological role, catalyzes the transfer of a methyl group from 5-methyltetrahydrofolate to homocysteine resulting in methionine formation. The protein is 5-methyltetrahydropteroyltriglutamate--homocysteine methyltransferase of Burkholderia ambifaria (strain ATCC BAA-244 / DSM 16087 / CCUG 44356 / LMG 19182 / AMMD) (Burkholderia cepacia (strain AMMD)).